The chain runs to 272 residues: 3-methyl-2-oxobutanoate hydroxymethyltransferase (272 aa).

Residues D52 and D91 each contribute to the Mg(2+) site. Residues 52-53, D91, and K121 contribute to the 3-methyl-2-oxobutanoate site; that span reads DS. E123 contacts Mg(2+). The active-site Proton acceptor is E190.

Belongs to the PanB family. Homodecamer; pentamer of dimers. The cofactor is Mg(2+).

The protein resides in the cytoplasm. It catalyses the reaction 3-methyl-2-oxobutanoate + (6R)-5,10-methylene-5,6,7,8-tetrahydrofolate + H2O = 2-dehydropantoate + (6S)-5,6,7,8-tetrahydrofolate. It participates in cofactor biosynthesis; (R)-pantothenate biosynthesis; (R)-pantoate from 3-methyl-2-oxobutanoate: step 1/2. Catalyzes the reversible reaction in which hydroxymethyl group from 5,10-methylenetetrahydrofolate is transferred onto alpha-ketoisovalerate to form ketopantoate. The polypeptide is 3-methyl-2-oxobutanoate hydroxymethyltransferase (Christiangramia forsetii (strain DSM 17595 / CGMCC 1.15422 / KT0803) (Gramella forsetii)).